Reading from the N-terminus, the 432-residue chain is Phosphomethylpyrimidine synthase (432 aa).

Substrate contacts are provided by residues asparagine 66, methionine 95, tyrosine 124, histidine 163, 185 to 187 (SRG), 226 to 229 (DGLR), and glutamate 265. Histidine 269 lines the Zn(2+) pocket. Tyrosine 292 is a binding site for substrate. Histidine 333 is a binding site for Zn(2+). 3 residues coordinate [4Fe-4S] cluster: cysteine 409, cysteine 412, and cysteine 416.

This sequence belongs to the ThiC family. It depends on [4Fe-4S] cluster as a cofactor.

It catalyses the reaction 5-amino-1-(5-phospho-beta-D-ribosyl)imidazole + S-adenosyl-L-methionine = 4-amino-2-methyl-5-(phosphooxymethyl)pyrimidine + CO + 5'-deoxyadenosine + formate + L-methionine + 3 H(+). The protein operates within cofactor biosynthesis; thiamine diphosphate biosynthesis. Functionally, catalyzes the synthesis of the hydroxymethylpyrimidine phosphate (HMP-P) moiety of thiamine from aminoimidazole ribotide (AIR) in a radical S-adenosyl-L-methionine (SAM)-dependent reaction. This Caldanaerobacter subterraneus subsp. tengcongensis (strain DSM 15242 / JCM 11007 / NBRC 100824 / MB4) (Thermoanaerobacter tengcongensis) protein is Phosphomethylpyrimidine synthase.